Here is a 403-residue protein sequence, read N- to C-terminus: Tyrosine--tRNA ligase (403 aa).

The 'HIGH' region signature appears at 42 to 51 (PTAPDLHLGH). The 'KMSKS' region motif lies at 226 to 230 (KMSKS). K229 serves as a coordination point for ATP. Positions 339-400 (LRLAGLLTAA…GKRNFARVLL (62 aa)) constitute an S4 RNA-binding domain.

The protein belongs to the class-I aminoacyl-tRNA synthetase family. TyrS type 2 subfamily. Homodimer.

It is found in the cytoplasm. It carries out the reaction tRNA(Tyr) + L-tyrosine + ATP = L-tyrosyl-tRNA(Tyr) + AMP + diphosphate + H(+). Catalyzes the attachment of tyrosine to tRNA(Tyr) in a two-step reaction: tyrosine is first activated by ATP to form Tyr-AMP and then transferred to the acceptor end of tRNA(Tyr). The chain is Tyrosine--tRNA ligase from Xanthomonas euvesicatoria pv. vesicatoria (strain 85-10) (Xanthomonas campestris pv. vesicatoria).